Consider the following 178-residue polypeptide: RNA pyrophosphohydrolase (178 aa).

Positions 18-171 (PYRPCVGLMV…KRKVYEQVVA (154 aa)) constitute a Nudix hydrolase domain. Residues 59–80 (GGIDKGEDPAQAALRELYEETG) carry the Nudix box motif.

This sequence belongs to the Nudix hydrolase family. RppH subfamily. The cofactor is a divalent metal cation.

Accelerates the degradation of transcripts by removing pyrophosphate from the 5'-end of triphosphorylated RNA, leading to a more labile monophosphorylated state that can stimulate subsequent ribonuclease cleavage. The chain is RNA pyrophosphohydrolase from Brucella melitensis biotype 2 (strain ATCC 23457).